Reading from the N-terminus, the 173-residue chain is uncharacterized protein (173 aa).

Residues 1 to 11 (MLCAKNKKDPK) show a composition bias toward basic and acidic residues. The tract at residues 1 to 173 (MLCAKNKKDP…EKMEKSEKAY (173 aa)) is disordered. Residues 17 to 41 (FSETSKVQNVQNTQPKPAAPSQMSI) show a composition bias toward polar residues. Basic and acidic residues-rich tracts occupy residues 56–109 (KSVE…KADN) and 120–144 (AKKE…EAKK). The span at 145–156 (KESRRQKKMRNK) shows a compositional bias: basic residues. A compositionally biased stretch (basic and acidic residues) spans 157-173 (NSKEGSVEKMEKSEKAY).

This is an uncharacterized protein from Caenorhabditis elegans.